A 257-amino-acid chain; its full sequence is 5'-nucleotidase SurE (257 aa).

Residues Asp8, Asp9, Ser40, and Asn93 each coordinate a divalent metal cation.

This sequence belongs to the SurE nucleotidase family. Requires a divalent metal cation as cofactor.

It is found in the cytoplasm. The catalysed reaction is a ribonucleoside 5'-phosphate + H2O = a ribonucleoside + phosphate. Functionally, nucleotidase that shows phosphatase activity on nucleoside 5'-monophosphates. The chain is 5'-nucleotidase SurE from Phenylobacterium zucineum (strain HLK1).